A 495-amino-acid chain; its full sequence is Lysine--tRNA ligase (495 aa).

Residues E406 and E413 each contribute to the Mg(2+) site.

This sequence belongs to the class-II aminoacyl-tRNA synthetase family. In terms of assembly, homodimer. Mg(2+) is required as a cofactor.

Its subcellular location is the cytoplasm. It carries out the reaction tRNA(Lys) + L-lysine + ATP = L-lysyl-tRNA(Lys) + AMP + diphosphate. The polypeptide is Lysine--tRNA ligase (Leuconostoc mesenteroides subsp. mesenteroides (strain ATCC 8293 / DSM 20343 / BCRC 11652 / CCM 1803 / JCM 6124 / NCDO 523 / NBRC 100496 / NCIMB 8023 / NCTC 12954 / NRRL B-1118 / 37Y)).